Here is a 389-residue protein sequence, read N- to C-terminus: MVTVEEYRKAQRAEGPATILAIGTSTPSNCVDQSTYPDYYFRITNSEHKTELKEKFKRMCDKSMIKKRYMHLTEEILKENPNMCAYMAPSLDARQDIVVVEVPKLGKRGTQKAIKEWGQPKSKITHLVFCTTSGVDMPACDYQLAKLLPVRPSVKRLMMYQQGCFAGGTVLRLAKDLAENNKGARVLVVCSEITAVTFRGPSESHLDSLVGQALFGDGAAAIIIGSDPIIGVERPLFELVSAAQTLVPDSEGAIDGHLREVGLTFHLLKDVPGLISKNIEKSLLEAFQPLGISDWNSLFWIAHPGGPAILDQVELKLGLKPEKLRATREVLSNYGNMSSACVLFILDEMRKASTKEGLGTTGEGLEWGVLFGFGPGLTVETVVLHSVAA.

The active site involves cysteine 164.

This sequence belongs to the thiolase-like superfamily. Chalcone/stilbene synthases family.

The enzyme catalyses (E)-4-coumaroyl-CoA + 3 malonyl-CoA + 3 H(+) = 2',4,4',6'-tetrahydroxychalcone + 3 CO2 + 4 CoA. It participates in secondary metabolite biosynthesis; flavonoid biosynthesis. In terms of biological role, the primary product of this enzyme is 4,2',4',6'-tetrahydroxychalcone (also termed naringenin-chalcone or chalcone) which can under specific conditions spontaneously isomerize into naringenin. The chain is Chalcone synthase 1 (CHS1) from Solanum lycopersicum (Tomato).